The chain runs to 176 residues: Peptidyl-tRNA hydrolase (176 aa).

Y14 contributes to the tRNA binding site. H19 serves as the catalytic Proton acceptor. 3 residues coordinate tRNA: Y65, N67, and N113.

This sequence belongs to the PTH family. In terms of assembly, monomer.

The protein resides in the cytoplasm. The enzyme catalyses an N-acyl-L-alpha-aminoacyl-tRNA + H2O = an N-acyl-L-amino acid + a tRNA + H(+). Its function is as follows. Hydrolyzes ribosome-free peptidyl-tRNAs (with 1 or more amino acids incorporated), which drop off the ribosome during protein synthesis, or as a result of ribosome stalling. In terms of biological role, catalyzes the release of premature peptidyl moieties from peptidyl-tRNA molecules trapped in stalled 50S ribosomal subunits, and thus maintains levels of free tRNAs and 50S ribosomes. In Phytoplasma mali (strain AT), this protein is Peptidyl-tRNA hydrolase.